The chain runs to 465 residues: MEPRVGNKFRLGRKIGGGSFGEIYLGTNIQTNEEVAIKLENVKTKHPQLLYESKLYKVLQGGTGVPNVKWYGVEGDYNVLVIDLLGPSLEDLFNFCSRKLSLKTVLMLADQMINRIEFVHQKSFLHRDIKPDNFLMGLGRRANQVYVIDFGLAKKYRDSNHQHIPYRENKNLTGTARYASMNTHLGIEQSRRDDLESLGFVLMYFLKGSLPWQGLKAGNKKQKYEKISEKKVSTSIEALCRGYPSEFASYFHYCRSLRFDDKPDYAYLKRLFRDLFIREGFQFDYVFDWTILKYQQSQISTPPPRHHGPVVGPSSALPPAITSAERPSGGDEARPSGWSSGIPRRNSGQIFNSGSLAKQKAPVSSDPAISKDVVLSSSSFLRATGSSRRAAVSSSREAAVLGTDSEPSNPQIVEAGSGSNSKIPVSRNSPIVSSEINKLSSPSRATTSVMKNYEANLKGIESLHF.

The 269-residue stretch at 9-277 folds into the Protein kinase domain; the sequence is FRLGRKIGGG…LKRLFRDLFI (269 aa). Residues 15-23 and Lys-38 contribute to the ATP site; that span reads IGGGSFGEI. Asp-128 acts as the Proton acceptor in catalysis. Disordered regions lie at residues 300–344 and 396–428; these read STPP…GIPR and REAA…VSRN. Residues 405–428 show a composition bias toward polar residues; sequence SEPSNPQIVEAGSGSNSKIPVSRN.

This sequence belongs to the protein kinase superfamily. CK1 Ser/Thr protein kinase family. Casein kinase I subfamily. Monomer. Autophosphorylated.

The protein localises to the cytoplasm. The protein resides in the nucleus. The enzyme catalyses L-seryl-[protein] + ATP = O-phospho-L-seryl-[protein] + ADP + H(+). It catalyses the reaction L-threonyl-[protein] + ATP = O-phospho-L-threonyl-[protein] + ADP + H(+). Casein kinases are operationally defined by their preferential utilization of acidic proteins such as caseins as substrates. It can phosphorylate a large number of proteins. The polypeptide is Casein kinase 1-like protein 2 (Arabidopsis thaliana (Mouse-ear cress)).